A 79-amino-acid chain; its full sequence is Small ribosomal subunit protein bS16c (79 aa).

Belongs to the bacterial ribosomal protein bS16 family.

The protein localises to the plastid. It localises to the chloroplast. The protein is Small ribosomal subunit protein bS16c of Staurastrum punctulatum (Green alga).